The following is a 49-amino-acid chain: Large ribosomal subunit protein bL33 (49 aa).

Belongs to the bacterial ribosomal protein bL33 family.

In Pseudothermotoga lettingae (strain ATCC BAA-301 / DSM 14385 / NBRC 107922 / TMO) (Thermotoga lettingae), this protein is Large ribosomal subunit protein bL33.